Reading from the N-terminus, the 503-residue chain is Aromatase (503 aa).

The next 2 helical transmembrane spans lie at 19–39 (EVVP…LLVW) and 53–73 (FLGI…IGSA). Substrate-binding residues include D309 and M374. C437 lines the heme pocket.

The protein belongs to the cytochrome P450 family. The cofactor is heme.

The protein localises to the endoplasmic reticulum membrane. It is found in the microsome membrane. The catalysed reaction is testosterone + 3 reduced [NADPH--hemoprotein reductase] + 3 O2 = 17beta-estradiol + formate + 3 oxidized [NADPH--hemoprotein reductase] + 4 H2O + 4 H(+). It carries out the reaction androst-4-ene-3,17-dione + 3 reduced [NADPH--hemoprotein reductase] + 3 O2 = estrone + formate + 3 oxidized [NADPH--hemoprotein reductase] + 4 H2O + 4 H(+). The enzyme catalyses androst-4-ene-3,17-dione + reduced [NADPH--hemoprotein reductase] + O2 = 19-hydroxyandrost-4-ene-3,17-dione + oxidized [NADPH--hemoprotein reductase] + H2O + H(+). It catalyses the reaction 19-hydroxyandrost-4-ene-3,17-dione + reduced [NADPH--hemoprotein reductase] + O2 = 19-oxo-androst-4-ene-3,17-dione + oxidized [NADPH--hemoprotein reductase] + 2 H2O + H(+). The catalysed reaction is 19-oxo-androst-4-ene-3,17-dione + reduced [NADPH--hemoprotein reductase] + O2 = estrone + formate + oxidized [NADPH--hemoprotein reductase] + H2O + 2 H(+). It carries out the reaction estrone + reduced [NADPH--hemoprotein reductase] + O2 = 2-hydroxyestrone + oxidized [NADPH--hemoprotein reductase] + H2O + H(+). The enzyme catalyses 17beta-hydroxy-5alpha-androstan-3-one + reduced [NADPH--hemoprotein reductase] + O2 = 17beta,19-dihydroxy-3-oxo-5alpha-androstanone + oxidized [NADPH--hemoprotein reductase] + H2O + H(+). It catalyses the reaction 17beta,19-dihydroxy-3-oxo-5alpha-androstanone + reduced [NADPH--hemoprotein reductase] + O2 = 17beta-hydroxy-3,19-dioxo-5alpha-androstanone + oxidized [NADPH--hemoprotein reductase] + 2 H2O + H(+). The catalysed reaction is 17beta-hydroxy-3,19-dioxo-5alpha-androstanone + reduced [NADPH--hemoprotein reductase] + O2 = 17beta-hydroxy-3-oxo-19-nor-5alpha-androst-1-ene + formate + oxidized [NADPH--hemoprotein reductase] + H2O + 2 H(+). Its pathway is steroid hormone biosynthesis. Its function is as follows. A cytochrome P450 monooxygenase that catalyzes the conversion of C19 androgens, androst-4-ene-3,17-dione (androstenedione) and testosterone to the C18 estrogens, estrone and estradiol, respectively. Catalyzes three successive oxidations of C19 androgens: two conventional oxidations at C19 yielding 19-hydroxy and 19-oxo/19-aldehyde derivatives, followed by a third oxidative aromatization step that involves C1-beta hydrogen abstraction combined with cleavage of the C10-C19 bond to yield a phenolic A ring and formic acid. Alternatively, the third oxidative reaction yields a 19-norsteroid and formic acid. Converts dihydrotestosterone to delta1,10-dehydro 19-nordihydrotestosterone and may play a role in homeostasis of this potent androgen. Also displays 2-hydroxylase activity toward estrone. Mechanistically, uses molecular oxygen inserting one oxygen atom into a substrate, and reducing the second into a water molecule, with two electrons provided by NADPH via cytochrome P450 reductase (CPR; NADPH-ferrihemoprotein reductase). This Bos taurus (Bovine) protein is Aromatase (CYP19A1).